Reading from the N-terminus, the 309-residue chain is NAD kinase (309 aa).

Aspartate 89 (proton acceptor) is an active-site residue. NAD(+) contacts are provided by residues 89–90 (DG), 163–164 (NE), histidine 174, arginine 191, aspartate 193, and 204–209 (TAYSLS).

It belongs to the NAD kinase family. It depends on a divalent metal cation as a cofactor.

The protein resides in the cytoplasm. The enzyme catalyses NAD(+) + ATP = ADP + NADP(+) + H(+). Functionally, involved in the regulation of the intracellular balance of NAD and NADP, and is a key enzyme in the biosynthesis of NADP. Catalyzes specifically the phosphorylation on 2'-hydroxyl of the adenosine moiety of NAD to yield NADP. The polypeptide is NAD kinase (Shewanella denitrificans (strain OS217 / ATCC BAA-1090 / DSM 15013)).